The sequence spans 309 residues: Nucleotide-binding protein cgR_1639 (309 aa).

32–39 (GMSGAGLS) serves as a coordination point for ATP. 83–86 (DVRS) contributes to the GTP binding site.

This sequence belongs to the RapZ-like family.

Displays ATPase and GTPase activities. This Corynebacterium glutamicum (strain R) protein is Nucleotide-binding protein cgR_1639.